We begin with the raw amino-acid sequence, 669 residues long: RNA-binding protein 14 (669 aa).

RRM domains lie at 1–73 (MKIF…MSRP) and 79–149 (WKIF…LSTK). Glycyl lysine isopeptide (Lys-Gly) (interchain with G-Cter in SUMO2) cross-links involve residues Lys-126, Lys-135, Lys-138, Lys-149, and Lys-153. Disordered regions lie at residues 148–175 (TKGQ…DTAF) and 193–232 (NSTG…PLTA). Ser-161 is subject to Phosphoserine. N6-acetyllysine; alternate is present on Lys-164. A Glycyl lysine isopeptide (Lys-Gly) (interchain with G-Cter in SUMO2); alternate cross-link involves residue Lys-164. Thr-206 carries the post-translational modification Phosphothreonine. A phosphoserine mark is found at Ser-220, Ser-242, Ser-244, Ser-256, Ser-272, and Ser-280. Residues 284–303 (PYRGQLASPSSQSAAASSLG) are disordered. Positions 287-303 (GQLASPSSQSAAASSLG) are enriched in low complexity. Residues 307-354 (GAQPSASALSSYGGQPAAASSLNSYGAQGSSLASYGNQPSSYGAQAAS) are TRBP-interacting domain; interaction with STIL. Phosphoserine occurs at positions 520, 523, 527, and 562. Residues 569–590 (ANSTPPPYERTRLSPPRASYDD) are disordered. Position 572 is a phosphothreonine (Thr-572). Ser-582 bears the Phosphoserine mark. A Glycyl lysine isopeptide (Lys-Gly) (interchain with G-Cter in SUMO2) cross-link involves residue Lys-600. Phosphoserine is present on residues Ser-618, Ser-620, Ser-623, Ser-627, Ser-643, and Ser-649.

In terms of assembly, interacts with NCOA6, CITED1 and XRCC5/KU86. Interacts with SS18. Interacts with STIL and interferes with its interaction with CPAP. Interacts with gamma-tubulin. Part of the HDP-RNP complex composed of at least HEXIM1, PRKDC, XRCC5, XRCC6, paraspeckle proteins (SFPQ, NONO, PSPC1, RBM14, and MATR3) and NEAT1 RNA.

The protein resides in the nucleus. It localises to the nucleolus. Its subcellular location is the cytoplasm. Its function is as follows. May function as a nuclear receptor coactivator, enhancing transcription through other coactivators such as NCOA6 and CITED1. Regulates centriole biogenesis by suppressing the formation of aberrant centriolar protein complexes in the cytoplasm and thus preserving mitotic spindle integrity. Prevents the formation of the STIL-CPAP complex (which can induce the formation of aberrant centriolar protein complexes) by interfering with the interaction of STIL with CPAP. Plays a role in the regulation of DNA virus-mediated innate immune response by assembling into the HDP-RNP complex, a complex that serves as a platform for IRF3 phosphorylation and subsequent innate immune response activation through the cGAS-STING pathway. The chain is RNA-binding protein 14 (RBM14) from Bos taurus (Bovine).